A 155-amino-acid polypeptide reads, in one-letter code: Ribosomal RNA large subunit methyltransferase H (155 aa).

S-adenosyl-L-methionine-binding positions include Leu72, Gly103, and 122-127 (LSDLTL).

Belongs to the RNA methyltransferase RlmH family. As to quaternary structure, homodimer.

The protein resides in the cytoplasm. The enzyme catalyses pseudouridine(1915) in 23S rRNA + S-adenosyl-L-methionine = N(3)-methylpseudouridine(1915) in 23S rRNA + S-adenosyl-L-homocysteine + H(+). Specifically methylates the pseudouridine at position 1915 (m3Psi1915) in 23S rRNA. The sequence is that of Ribosomal RNA large subunit methyltransferase H from Paracidovorax citrulli (strain AAC00-1) (Acidovorax citrulli).